Here is a 356-residue protein sequence, read N- to C-terminus: MDWALILAWGIKILSLFFVILTGVAYYTLAERKFAGFIQDRPGPNRAGPFGIFQPLADGIKFIAKEEIFPKNVSKGMYLLAPTISMTCAIMAWAVIPFGGTLPAPEWLTTLTGVATIDLQIANPDSGVLYMLAISSLSVYGIMIAGWSSNNKYSLLGGVRSTAQMISYELPMGLSIVAIVIMTGSLKLTDISDSQKDMWNILSPPGFVAFFIYVTAMFAETNRLPFDLAEAESELVVGFHTEYGAFKFALFFLAEYMNMITMSCLTTLLFFGGYNVPFQLGAGSEYQAFIGLGFFILKVLFFAFLFIWVRWTLPRFRYDQLMKLGWKKMIPWGLFVVMFASIYTVYWKEGWMKLFI.

The next 8 membrane-spanning stretches (helical) occupy residues 4–24, 79–99, 127–147, 166–186, 198–218, 251–271, 289–309, and 329–349; these read ALIL…LTGV, LLAP…IPFG, GVLY…IAGW, ISYE…TGSL, MWNI…TAMF, FFLA…LLFF, FIGL…FIWV, and MIPW…YWKE.

The protein belongs to the complex I subunit 1 family. As to quaternary structure, NDH-1 is composed of 14 different subunits. Subunits NuoA, H, J, K, L, M, N constitute the membrane sector of the complex.

It is found in the cell inner membrane. The catalysed reaction is a quinone + NADH + 5 H(+)(in) = a quinol + NAD(+) + 4 H(+)(out). In terms of biological role, NDH-1 shuttles electrons from NADH, via FMN and iron-sulfur (Fe-S) centers, to quinones in the respiratory chain. The immediate electron acceptor for the enzyme in this species is believed to be ubiquinone. Couples the redox reaction to proton translocation (for every two electrons transferred, four hydrogen ions are translocated across the cytoplasmic membrane), and thus conserves the redox energy in a proton gradient. This subunit may bind ubiquinone. This chain is NADH-quinone oxidoreductase subunit H, found in Leptospira biflexa serovar Patoc (strain Patoc 1 / ATCC 23582 / Paris).